The following is a 177-amino-acid chain: Negative modulator of initiation of replication (177 aa).

It belongs to the SeqA family. As to quaternary structure, homodimer. Polymerizes to form helical filaments.

Its subcellular location is the cytoplasm. In terms of biological role, negative regulator of replication initiation, which contributes to regulation of DNA replication and ensures that replication initiation occurs exactly once per chromosome per cell cycle. Binds to pairs of hemimethylated GATC sequences in the oriC region, thus preventing assembly of replication proteins and re-initiation at newly replicated origins. Repression is relieved when the region becomes fully methylated. This chain is Negative modulator of initiation of replication, found in Vibrio cholerae serotype O1 (strain ATCC 39315 / El Tor Inaba N16961).